The sequence spans 576 residues: Arginine--tRNA ligase (576 aa).

The 'HIGH' region signature appears at 122–132 (PNVAKEMHVGH).

The protein belongs to the class-I aminoacyl-tRNA synthetase family. In terms of assembly, monomer.

It is found in the cytoplasm. The enzyme catalyses tRNA(Arg) + L-arginine + ATP = L-arginyl-tRNA(Arg) + AMP + diphosphate. The polypeptide is Arginine--tRNA ligase (Hamiltonella defensa subsp. Acyrthosiphon pisum (strain 5AT)).